The chain runs to 439 residues: Lactamase-like protein nscB (439 aa).

Histidine 214, histidine 216, aspartate 218, and histidine 219 together coordinate Zn(2+). The active-site Proton donor/acceptor is aspartate 218.

This sequence belongs to the metallo-beta-lactamase superfamily. The cofactor is Zn(2+).

It participates in secondary metabolite biosynthesis. In terms of biological role, lactamase-like protein; part of the gene cluster that mediates the biosynthesis of neosartoricin B, a prenylated anthracenone that probably exhibits T-cell antiproliferative activity, suggestive of a physiological role as an immunosuppressive agent. The non-reducing polyketide synthase nscA probably synthesizes and cyclizes the decaketide backbone. The hydrolase nscB then mediates the product release through hydrolysis followed by spontaneous decarboxylation. The prenyltransferase nscD catalyzes the addition of the dimethylallyl group to the aromatic C5. The FAD-dependent monooxygenase nscC is then responsible for the stereospecific hydroxylation at C2. Neosartoricin B can be converted into two additional compounds neosartoricins C and D. Neosartoricin C is a spirocyclic compound that is cyclized through the attack of C3 hydroxyl on C14, followed by dehydration. On the other hand, neosartoricin D is a further cyclized compound in which attack of C2 on C14 in neosartoricin C results in the formation of the acetal-containing dioxabicyclo-octanone ring. Both of these compounds are novel and possibly represent related metabolites of the gene cluster. The protein is Lactamase-like protein nscB of Arthroderma benhamiae (strain ATCC MYA-4681 / CBS 112371) (Trichophyton mentagrophytes).